Here is a 377-residue protein sequence, read N- to C-terminus: MVELNLNHIYKKYPNSSHYSVEDFDLDIKNKEFIVFVGPSGCGKSTTLRMVAGLEDITKGELKIDGEVVNDKAPKDRDIAMVFQNYALYPHMSVYDNMAFGLKLRHYSKEAIDKRVKEAAQILGLTEFLERKPADLSGGQRQRVAMGRAIVRDAKVFLMDEPLSNLDAKLRVSMRAEIAKIHRRIGATTIYVTHDQTEAMTLADRIVIMSSTKNEDGSGTIGRVEQVGTPQELYNRPANKFVAGFIGSPAMNFFDVTIKDGHLVSKDGLTIAVTEGQLKMLESKGFKNKNLIFGIRPEDISSSLLVQETYPDATVDAEVVVSELLGSETMLYLKLGQTEFAARVDARDFHEPGEKVSLTFNVAKGHFFDAETEAAIR.

Residues 4-246 (LNLNHIYKKY…PANKFVAGFI (243 aa)) form the ABC transporter domain. Residue 38–45 (GPSGCGKS) coordinates ATP.

Belongs to the ABC transporter superfamily.

Its subcellular location is the cell membrane. Functionally, involved in a binding protein-dependent transport system responsible for the uptake of melibiose, raffinose and isomaltotriose. Probably responsible for energy coupling to the transport system. The chain is Multiple sugar-binding transport ATP-binding protein MsmK (msmK) from Streptococcus mutans serotype c (strain ATCC 700610 / UA159).